Here is a 737-residue protein sequence, read N- to C-terminus: tRNA (guanine(27)-N(2))-dimethyltransferase (737 aa).

Over residues 1–10 the composition is skewed to acidic residues; that stretch reads MENMAEEELL. The disordered stretch occupies residues 1–65; that stretch reads MENMAEEELL…ASAPVPAPAL (65 aa). A compositionally biased stretch (low complexity) spans 17 to 49; it reads VVQVPVPTPTPDSARVPAPAPDSAPVSASTPAP. Position 24 is a phosphothreonine (T24). Pro residues predominate over residues 50–62; sequence ASAPTPASAPVPA. S72 is subject to Phosphoserine. Positions 141 to 145 match the Nucleolar localization signal motif; the sequence is HKLHR. The C2H2-type zinc finger occupies 190–212; sequence YHCIICSATITRRTDMLGHVRRH. Residues 233 to 692 enclose the Trm1 methyltransferase domain; the sequence is EILKEADTDV…APLMQFKSIL (460 aa). Residues R266, D313, D363, and A364 each coordinate S-adenosyl-L-methionine. C494, C497, C519, and C521 together coordinate Zn(2+). K589 participates in a covalent cross-link: Glycyl lysine isopeptide (Lys-Gly) (interchain with G-Cter in SUMO2). The residue at position 616 (S616) is a Phosphoserine.

The protein belongs to the class I-like SAM-binding methyltransferase superfamily. Trm1 family.

The protein resides in the nucleus. It is found in the nucleolus. It carries out the reaction guanosine(27) in tRNA(Tyr) + 2 S-adenosyl-L-methionine = N(2)-dimethylguanosine(27) in tRNA(Tyr) + 2 S-adenosyl-L-homocysteine + 2 H(+). Functionally, specifically dimethylates a single guanine residue at position 27 of tRNA(Tyr) using S-adenosyl-L-methionine as donor of the methyl groups. Dimethylation at position 27 of tRNA(Tyr) is required for efficient translation of tyrosine codons. Also required to maintain 3-(3-amino-3-carboxypropyl)uridine (acp3U) in the D-loop of several cytoplasmic tRNAs. In Bos taurus (Bovine), this protein is tRNA (guanine(27)-N(2))-dimethyltransferase (TRMT1L).